A 378-amino-acid polypeptide reads, in one-letter code: MKAVTYQGIKNVVVKDVPDPKIEKSDDMIIKVTSTAICGSDLHLIHGFIPNMQEDYVIGHEPMGIVEEVGSGVTKLKKGDRVIIPFNIACGECFFCKNQLESQCDQSNDNGEMGAYFGYSGQTGGYPGGQAEYLRVPFANFTHFKIPESCEEPDEKLSVIADAMTTGFWSVDNAGVKKGDTVIVLGCGPVGLFAQKFCWLKGAKRVIAVDYVNYRLQHAKRTNKVEIVNFEDHENTGNYLKEITKGGADVVIDAVGMDGKMSDLEFLASGLKLHGGTMSALVIASQAVRKGGTIQITGVYGGRYNGFPLGDIMQRNVNIRSGQAPVIHYMPYMFELVSTGKIDPGDVVSHVLPLSEAKHGYDIFDSKMDDCIKVVLKP.

The Zn(2+) site is built by Cys-38, His-60, Cys-90, Cys-93, Cys-96, and Cys-104.

This sequence belongs to the zinc-containing alcohol dehydrogenase family. Class-III subfamily. It depends on Zn(2+) as a cofactor.

This is an uncharacterized protein from Bacillus subtilis (strain 168).